The following is a 478-amino-acid chain: MESKVLLLLALSVWLQSLTVSRGGLVAADRITRGKDFRDIESKFALRTPEDTAEDTCHLIPGVTESVANCHFNHSSKTFVVIHGWTVTGMYESWVPKLVAALYKREPDSNVIVVDWLSRAQQHYPVSAGYTKLVGQDVAKFMNWMADEFNYPLGNVHLLGYSLGAHAAGIAGSLTNKKVNRITGLDPAGPNFEYAEAPSRLSPDDADFVDVLHTFTRGSPGRSIGIQKPVGHVDIYPNGGTFQPGCNIGEALRVIAERGLGDVDQLVKCSHERSVHLFIDSLLNEENPSKAYRCNSKEAFEKGLCLSCRKNRCNNMGYEINKVRAKRSSKMYLKTRSQMPYKVFHYQVKIHFSGTESNTYTNQAFEISLYGTVAESENIPFTLPEVSTNKTYSFLLYTEVDIGELLMLKLKWISDSYFSWSNWWSSPGFDIGKIRVKAGETQKKVIFCSREKMSYLQKGKSPVIFVKCHDKSLNRKSG.

The first 27 residues, 1-27, serve as a signal peptide directing secretion; the sequence is MESKVLLLLALSVWLQSLTVSRGGLVA. The interaction with GPIHBP1 stretch occupies residues 35-56; sequence KDFRDIESKFALRTPEDTAEDT. Cys-57 and Cys-70 are joined by a disulfide. Asn-73 is a glycosylation site (N-linked (GlcNAc...) asparagine). Tyr-124 carries the 3'-nitrotyrosine modification. Ser-162 (nucleophile) is an active-site residue. Asp-186 functions as the Charge relay system in the catalytic mechanism. Residue Tyr-194 is modified to 3'-nitrotyrosine. Ala-197, Arg-200, Ser-202, and Asp-205 together coordinate Ca(2+). A disulfide bridge connects residues Cys-246 and Cys-269. Residues 246–269 are essential for determining substrate specificity; the sequence is CNIGEALRVIAERGLGDVDQLVKC. His-271 acts as the Charge relay system in catalysis. 2 disulfides stabilise this stretch: Cys-294/Cys-313 and Cys-305/Cys-308. The PLAT domain occupies 344–467; sequence FHYQVKIHFS…KGKSPVIFVK (124 aa). Tyr-346 is subject to 3'-nitrotyrosine. Asn-389 is a glycosylation site (N-linked (GlcNAc...) asparagine). An important for interaction with lipoprotein particles region spans residues 420–424; it reads WSNWW. The tract at residues 433–437 is important for heparin binding; sequence KIRVK. The interval 446–470 is interaction with GPIHBP1; it reads IFCSREKMSYLQKGKSPVIFVKCHD. A disulfide bridge connects residues Cys-448 and Cys-468.

This sequence belongs to the AB hydrolase superfamily. Lipase family. Homodimer. Interacts with GPIHBP1 with 1:1 stoichiometry. Interacts with APOC2; the interaction activates LPL activity in the presence of lipids. Interaction with heparan sulfate proteoglycans is required to protect LPL against loss of activity. Associates with lipoprotein particles in blood plasma. Interacts with LMF1 and SEL1L; interaction with SEL1L is required to prevent aggregation of newly synthesized LPL in the endoplasmic reticulum (ER), and for normal export of LPL from the ER to the extracellular space. Interacts with SORL1; SORL1 acts as a sorting receptor, promoting LPL localization to endosomes and later to lysosomes, leading to degradation of newly synthesized LPL. Post-translationally, tyrosine nitration after lipopolysaccharide (LPS) challenge down-regulates the lipase activity.

Its subcellular location is the cell membrane. It is found in the secreted. It localises to the extracellular space. The protein resides in the extracellular matrix. It carries out the reaction a triacylglycerol + H2O = a diacylglycerol + a fatty acid + H(+). The catalysed reaction is a 1,2-diacyl-sn-glycero-3-phosphocholine + H2O = a 2-acyl-sn-glycero-3-phosphocholine + a fatty acid + H(+). The enzyme catalyses 1,2,3-tri-(9Z-octadecenoyl)-glycerol + H2O = di-(9Z)-octadecenoylglycerol + (9Z)-octadecenoate + H(+). It catalyses the reaction 1,2-di-(9Z-octadecenoyl)-sn-glycero-3-phosphocholine + H2O = (9Z-octadecenoyl)-sn-glycero-3-phosphocholine + (9Z)-octadecenoate + H(+). It carries out the reaction 1,2,3-tributanoylglycerol + H2O = dibutanoylglycerol + butanoate + H(+). The catalysed reaction is 1,2-dihexadecanoyl-sn-glycero-3-phosphocholine + H2O = hexadecanoyl-sn-glycero-3-phosphocholine + hexadecanoate + H(+). With respect to regulation, the apolipoprotein APOC2 acts as a coactivator of LPL activity. Ca(2+) binding promotes protein stability and formation of the active homodimer. Interaction with GPIHBP1 protects LPL against inactivation by ANGPTL4. In terms of biological role, key enzyme in triglyceride metabolism. Catalyzes the hydrolysis of triglycerides from circulating chylomicrons and very low density lipoproteins (VLDL), and thereby plays an important role in lipid clearance from the blood stream, lipid utilization and storage. Although it has both phospholipase and triglyceride lipase activities it is primarily a triglyceride lipase with low but detectable phospholipase activity. Mediates margination of triglyceride-rich lipoprotein particles in capillaries. Recruited to its site of action on the luminal surface of vascular endothelium by binding to GPIHBP1 and cell surface heparan sulfate proteoglycans. This is Lipoprotein lipase (LPL) from Ovis aries (Sheep).